The primary structure comprises 480 residues: Glycerol-3-phosphate transporter (480 aa).

At 1–36 the chain is on the cytoplasmic side; sequence MFGPFKPAPHIAELPAEKIDSTYKRLRWQVFAGIFF. The helical transmembrane segment at 37-57 threads the bilayer; that stretch reads GYAAYYFVRANFDLAQPGLIQ. At 58-64 the chain is on the periplasmic side; that stretch reads AGLYSKA. A helical membrane pass occupies residues 65 to 85; the sequence is ELGVIGSAAGLAYGLSKFVMA. At 86-94 the chain is on the cytoplasmic side; that stretch reads GMSDRSNPR. The chain crosses the membrane as a helical span at residues 95 to 113; the sequence is VFLPFGLLLSGLCMTLMGL. The Periplasmic portion of the chain corresponds to 114 to 121; it reads FPWATSGI. A helical membrane pass occupies residues 122–142; the sequence is AIMWVMIFLNGWFQGMGWPPC. Topologically, residues 143-161 are cytoplasmic; that stretch reads GRTMVHWWSKSERGTIVSI. Residues 162-181 form a helical membrane-spanning segment; sequence WNTAHNIGGMVPGAMVLLAS. The Periplasmic portion of the chain corresponds to 182–201; it reads AIFFSTHGIEAQAKDVWQQS. Residues 202–219 traverse the membrane as a helical segment; that stretch reads LYFPGIAAMIFAIPVYFV. Residues 220–274 lie on the Cytoplasmic side of the membrane; it reads MRDTPQSCGLPSIEKWRNDYPDDYNEKTYENDLTAKEIFVTYVLKNKLLWYIAIA. A helical membrane pass occupies residues 275 to 295; it reads NVFVYLIRYGVLKWSPVYLSE. Topologically, residues 296-300 are periplasmic; that stretch reads VKHFN. The chain crosses the membrane as a helical span at residues 301 to 321; the sequence is IKGTAWAYTIYELAAVPGTLL. Residues 322–334 are Cytoplasmic-facing; the sequence is CGWVSDKVFKGKR. The helical transmembrane segment at 335–354 threads the bilayer; that stretch reads GLTGFIFMILTTAAVVAYWM. At 355 to 359 the chain is on the periplasmic side; that stretch reads NPATP. The helical transmembrane segment at 360–396 threads the bilayer; the sequence is EAELANYSAWYENPYQLTDFVLMTLIGFLIYGPVMLI. Residues 397 to 415 lie on the Cytoplasmic side of the membrane; the sequence is GLHALELAPKKAAGTAAGF. The chain crosses the membrane as a helical span at residues 416-437; the sequence is TGLFGYLGGTVSASAVIGWAAQ. Residues 438–442 lie on the Periplasmic side of the membrane; sequence HYGWD. A helical transmembrane segment spans residues 443–463; that stretch reads GGFYVMIGGGVLAVLLLLIVM. The Cytoplasmic segment spans residues 464–479; sequence VEEGKHKAKLGDTYGT.

Belongs to the major facilitator superfamily. Organophosphate:Pi antiporter (OPA) (TC 2.A.1.4) family.

The protein resides in the cell inner membrane. Functionally, responsible for glycerol-3-phosphate uptake. This is Glycerol-3-phosphate transporter (glpT) from Haemophilus influenzae (strain ATCC 51907 / DSM 11121 / KW20 / Rd).